The primary structure comprises 394 residues: Nuclear hormone receptor family member nhr-18 (394 aa).

The nuclear receptor DNA-binding region spans 8–83 (SGSCEVCGDK…VGMDTRRFQT (76 aa)). 2 NR C4-type zinc fingers span residues 11 to 31 (CEVCGDKTSGRHFGVMSCRAC) and 48 to 71 (CPNGTCHTSVNGKFNCKQCRLKKC). The NR LBD domain occupies 134–394 (MLQKPTNHVL…FSHPEMFEAT (261 aa)).

It belongs to the nuclear hormone receptor family.

It is found in the nucleus. Functionally, orphan nuclear receptor. The sequence is that of Nuclear hormone receptor family member nhr-18 (nhr-18) from Caenorhabditis elegans.